The chain runs to 339 residues: Phenylalanine--tRNA ligase alpha subunit (339 aa).

Positions Met-1–Gln-14 are enriched in basic and acidic residues. The disordered stretch occupies residues Met-1 to Thr-20. Glu-254 contributes to the Mg(2+) binding site.

It belongs to the class-II aminoacyl-tRNA synthetase family. Phe-tRNA synthetase alpha subunit type 1 subfamily. As to quaternary structure, tetramer of two alpha and two beta subunits. Mg(2+) serves as cofactor.

Its subcellular location is the cytoplasm. The enzyme catalyses tRNA(Phe) + L-phenylalanine + ATP = L-phenylalanyl-tRNA(Phe) + AMP + diphosphate + H(+). The protein is Phenylalanine--tRNA ligase alpha subunit of Alkaliphilus metalliredigens (strain QYMF).